A 152-amino-acid chain; its full sequence is Biotin carboxyl carrier protein of acetyl-CoA carboxylase (152 aa).

Residues 72–148 (IIDILSPISG…TKNQVLMKII (77 aa)) form the Biotinyl-binding domain. Position 114 is an N6-biotinyllysine (Lys-114).

It localises to the plastid. The protein localises to the chloroplast. It participates in lipid metabolism; fatty acid biosynthesis. In terms of biological role, this protein is a component of the acetyl coenzyme A carboxylase complex; first, biotin carboxylase catalyzes the carboxylation of the carrier protein and then the transcarboxylase transfers the carboxyl group to form malonyl-CoA. In Cyanidium caldarium (Red alga), this protein is Biotin carboxyl carrier protein of acetyl-CoA carboxylase (accB).